The following is a 423-amino-acid chain: Tegument protein UL43 (423 aa).

Residues 1–12 (MEKTPAETTAVS) are compositionally biased toward polar residues. The tract at residues 1 to 46 (MEKTPAETTAVSAGNVPRDSIPCITNVSADTRGRTRPSRPATVPQR) is disordered.

This sequence belongs to the herpesviridae US22 family.

The protein resides in the virion tegument. This chain is Tegument protein UL43 (UL43), found in Homo sapiens (Human).